An 86-amino-acid chain; its full sequence is Anti-adapter protein IraP (86 aa).

Positions 1 to 36 (MKNLIAELLFKLAQKEEESKELCAQVEALEIIVTAM) form a coiled coil.

It belongs to the IraP family. In terms of assembly, interacts with RssB.

The protein resides in the cytoplasm. Functionally, inhibits RpoS proteolysis by regulating RssB activity, thereby increasing the stability of the sigma stress factor RpoS especially during phosphate starvation, but also in stationary phase and during nitrogen starvation. Its effect on RpoS stability is due to its interaction with RssB, which probably blocks the interaction of RssB with RpoS, and the consequent delivery of the RssB-RpoS complex to the ClpXP protein degradation pathway. The sequence is that of Anti-adapter protein IraP from Escherichia coli (strain SE11).